Here is a 209-residue protein sequence, read N- to C-terminus: uncharacterized protein (209 aa).

The next 3 membrane-spanning stretches (helical) occupy residues 26-48 (LRYF…GLAV), 147-169 (AYLV…PFLM), and 179-196 (IVAA…VYLL).

Its subcellular location is the cell membrane. This is an uncharacterized protein from Archaeoglobus fulgidus (strain ATCC 49558 / DSM 4304 / JCM 9628 / NBRC 100126 / VC-16).